The chain runs to 189 residues: Peptidyl-tRNA hydrolase (189 aa).

Tyrosine 15 provides a ligand contact to tRNA. Residue histidine 20 is the Proton acceptor of the active site. 3 residues coordinate tRNA: phenylalanine 66, asparagine 68, and asparagine 114.

It belongs to the PTH family. Monomer.

The protein resides in the cytoplasm. It carries out the reaction an N-acyl-L-alpha-aminoacyl-tRNA + H2O = an N-acyl-L-amino acid + a tRNA + H(+). In terms of biological role, hydrolyzes ribosome-free peptidyl-tRNAs (with 1 or more amino acids incorporated), which drop off the ribosome during protein synthesis, or as a result of ribosome stalling. Functionally, catalyzes the release of premature peptidyl moieties from peptidyl-tRNA molecules trapped in stalled 50S ribosomal subunits, and thus maintains levels of free tRNAs and 50S ribosomes. This is Peptidyl-tRNA hydrolase from Streptococcus sanguinis (strain SK36).